Reading from the N-terminus, the 396-residue chain is Seminal vesicle major clotting proteins (396 aa).

The signal sequence occupies residues 1 to 21 (MKSTIFFILSLLLMLENQAAG). Residues 45 to 178 (MEEAVSGSGL…ASSVDHRKKG (134 aa)) are disordered. A compositionally biased stretch (basic and acidic residues) spans 60-152 (RGSDREESVG…RVSVRHERVE (93 aa)). 3 SVP-3/-4 repeat repeats span residues 65 to 88 (EESV…RSSV), 89 to 112 (EEPE…RHNV), and 113 to 136 (EEPE…RHSA). The SVP-3/-4 repeat; truncated repeat unit spans residues 137 to 157 (EEPEGERVSVRHERVEKTHKR). Residues 177 to 192 (KGHIRFKRQDPIAALA) constitute a propeptide that is removed on maturation. SVP-1 clotting repeat units lie at residues 194–217 (IEGQ…ERFS), 218–241 (VKGQ…ERFS), 242–265 (VTGQ…ERFS), 266–289 (MTGQ…ERFS), 290–313 (MTGQ…ERFS), 314–337 (VTGQ…ERFS), 338–361 (VTGQ…ERFS), and 362–385 (VSGQ…SGFS). The tract at residues 194–396 (IEGQDAVKDS…KGQGSLKGLI (203 aa)) is 9 X tandem repeats of SVP-1 like motif. The tract at residues 377–396 (QESVQSGFSVKGQGSLKGLI) is disordered. The SVP-1 clotting 9; truncated repeat unit spans residues 386 to 396 (VKGQGSLKGLI).

To the SVP-2 precursor, particularly in regions where protein processing must occur. In terms of processing, SVP-3 may be a post-translationally modified form of SVP-4. Covalent clotting of SVP-1 is catalyzed by a transglutaminase secreted by the anterior prostate through the formation of gamma-glutamyl-epsilon-lysine cross-links. The conserved 2 Lys and 1 Gln residues per functional unit seem to be the residues involved in the formation of those cross-links.

The protein resides in the secreted. Its function is as follows. SVP-1 serves as substrate in the formation of the copulatory plug. SVP-3 and SVP-4 may also contribute to the clot. This Cavia porcellus (Guinea pig) protein is Seminal vesicle major clotting proteins.